Consider the following 273-residue polypeptide: Shikimate dehydrogenase (NADP(+)) (273 aa).

Residues 14–16 (SKS) and T61 contribute to the shikimate site. Catalysis depends on K65, which acts as the Proton acceptor. Residue D77 coordinates NADP(+). 2 residues coordinate shikimate: N86 and D102. Residues 127 to 131 (GAGGA), 151 to 156 (NRTGAR), and M215 contribute to the NADP(+) site. Residue Y217 coordinates shikimate. G239 contacts NADP(+).

This sequence belongs to the shikimate dehydrogenase family. Homodimer.

The catalysed reaction is shikimate + NADP(+) = 3-dehydroshikimate + NADPH + H(+). It functions in the pathway metabolic intermediate biosynthesis; chorismate biosynthesis; chorismate from D-erythrose 4-phosphate and phosphoenolpyruvate: step 4/7. In terms of biological role, involved in the biosynthesis of the chorismate, which leads to the biosynthesis of aromatic amino acids. Catalyzes the reversible NADPH linked reduction of 3-dehydroshikimate (DHSA) to yield shikimate (SA). This Thioalkalivibrio sulfidiphilus (strain HL-EbGR7) protein is Shikimate dehydrogenase (NADP(+)).